Consider the following 456-residue polypeptide: 3-isopropylmalate dehydratase large subunit (456 aa).

[4Fe-4S] cluster-binding residues include C336, C396, and C399.

It belongs to the aconitase/IPM isomerase family. LeuC type 1 subfamily. Heterodimer of LeuC and LeuD. Requires [4Fe-4S] cluster as cofactor.

The enzyme catalyses (2R,3S)-3-isopropylmalate = (2S)-2-isopropylmalate. It participates in amino-acid biosynthesis; L-leucine biosynthesis; L-leucine from 3-methyl-2-oxobutanoate: step 2/4. Catalyzes the isomerization between 2-isopropylmalate and 3-isopropylmalate, via the formation of 2-isopropylmaleate. In Staphylococcus saprophyticus subsp. saprophyticus (strain ATCC 15305 / DSM 20229 / NCIMB 8711 / NCTC 7292 / S-41), this protein is 3-isopropylmalate dehydratase large subunit.